Consider the following 602-residue polypeptide: Type 2 DNA topoisomerase 6 subunit B (602 aa).

ATP is bound by residues Asn40, Asp71, 92–93, 102–109, and Lys425; these read SR and GQQGIGIS.

The protein belongs to the TOP6B family. In terms of assembly, homodimer. Heterotetramer of two Top6A and two Top6B chains.

The enzyme catalyses ATP-dependent breakage, passage and rejoining of double-stranded DNA.. Relaxes both positive and negative superturns and exhibits a strong decatenase activity. The chain is Type 2 DNA topoisomerase 6 subunit B from Archaeoglobus fulgidus (strain ATCC 49558 / DSM 4304 / JCM 9628 / NBRC 100126 / VC-16).